The primary structure comprises 195 residues: Imidazoleglycerol-phosphate dehydratase (195 aa).

Belongs to the imidazoleglycerol-phosphate dehydratase family.

It localises to the cytoplasm. The enzyme catalyses D-erythro-1-(imidazol-4-yl)glycerol 3-phosphate = 3-(imidazol-4-yl)-2-oxopropyl phosphate + H2O. It functions in the pathway amino-acid biosynthesis; L-histidine biosynthesis; L-histidine from 5-phospho-alpha-D-ribose 1-diphosphate: step 6/9. In Burkholderia lata (strain ATCC 17760 / DSM 23089 / LMG 22485 / NCIMB 9086 / R18194 / 383), this protein is Imidazoleglycerol-phosphate dehydratase.